Consider the following 231-residue polypeptide: NADH-ubiquinone oxidoreductase chain 4 (231 aa).

The next 6 membrane-spanning stretches (helical) occupy residues 1–21 (PIAGSMVLAAILLKLGGYGII), 34–54 (MFLPFIVLALWGAILANLTCL), 63–85 (IAYSSVSHMGLVVAAIIIQTPWG), 89–111 (AMALMIAHGFTSSALFCLANTTY), 128–148 (ILPMTTTWWLLANLMNIATPP), and 156–176 (LLIMSALFNWCPTTIIMLGLS).

Belongs to the complex I subunit 4 family.

It localises to the mitochondrion membrane. The catalysed reaction is a ubiquinone + NADH + 5 H(+)(in) = a ubiquinol + NAD(+) + 4 H(+)(out). Functionally, core subunit of the mitochondrial membrane respiratory chain NADH dehydrogenase (Complex I) that is believed to belong to the minimal assembly required for catalysis. Complex I functions in the transfer of electrons from NADH to the respiratory chain. The immediate electron acceptor for the enzyme is believed to be ubiquinone. This Trimeresurus stejnegeri (Chinese green tree viper) protein is NADH-ubiquinone oxidoreductase chain 4 (MT-ND4).